The sequence spans 686 residues: Myb-related protein B (686 aa).

The segment at 1–28 (MARRSRGEDQDELHCQDTDSDVPEQRDG) is disordered. HTH myb-type domains lie at 26 to 77 (RDGR…LRVL), 78 to 133 (NPDL…NPEV), and 134 to 184 (KKSS…KRKV). 3 DNA-binding regions (H-T-H motif) span residues 54–77 (WKFL…LRVL), 106–129 (WTLI…HNHL), and 157–180 (WAEI…NSTI). Disordered regions lie at residues 315 to 355 (CDLT…VTEY) and 493 to 512 (YVVD…LEKY). Residues 326–343 (PSAGSSSSSNSPVRQTPS) are compositionally biased toward low complexity.

As to quaternary structure, component of the DREAM complex. In terms of tissue distribution, expressed in hematopoietic and non hematopoietic cells.

It localises to the nucleus. Functionally, represses v-myb- and c-myb-mediated activation of the mim-1 gene, probably by competing with other myb proteins for binding sites. It is an inhibitory member of the myb family. The chain is Myb-related protein B (MYBL2) from Gallus gallus (Chicken).